The sequence spans 443 residues: Thymidine phosphorylase (443 aa).

The protein belongs to the thymidine/pyrimidine-nucleoside phosphorylase family. As to quaternary structure, homodimer.

The enzyme catalyses thymidine + phosphate = 2-deoxy-alpha-D-ribose 1-phosphate + thymine. It functions in the pathway pyrimidine metabolism; dTMP biosynthesis via salvage pathway; dTMP from thymine: step 1/2. The enzymes which catalyze the reversible phosphorolysis of pyrimidine nucleosides are involved in the degradation of these compounds and in their utilization as carbon and energy sources, or in the rescue of pyrimidine bases for nucleotide synthesis. The polypeptide is Thymidine phosphorylase (Shewanella putrefaciens (strain CN-32 / ATCC BAA-453)).